Here is a 332-residue protein sequence, read N- to C-terminus: Ferredoxin--NADP reductase (332 aa).

Thr-20, Glu-39, Gln-47, Tyr-52, Val-92, Phe-126, Asp-288, and Thr-329 together coordinate FAD.

This sequence belongs to the ferredoxin--NADP reductase type 2 family. As to quaternary structure, homodimer. FAD is required as a cofactor.

The enzyme catalyses 2 reduced [2Fe-2S]-[ferredoxin] + NADP(+) + H(+) = 2 oxidized [2Fe-2S]-[ferredoxin] + NADPH. The protein is Ferredoxin--NADP reductase of Geobacillus kaustophilus (strain HTA426).